Reading from the N-terminus, the 142-residue chain is Large ribosomal subunit protein cL37 alpha (142 aa).

Residues 1–62 (MALLSPLLSL…AQKRGTVVAM (62 aa)) constitute a chloroplast transit peptide. The tract at residues 123–142 (RKLRKRGAWPPSKMKKLKNV) is disordered.

It belongs to the chloroplast-specific ribosomal protein cL37 family. As to quaternary structure, component of the chloroplast large ribosomal subunit (LSU). Mature 70S chloroplast ribosomes of higher plants consist of a small (30S) and a large (50S) subunit. The 30S small subunit contains 1 molecule of ribosomal RNA (16S rRNA) and 24 different proteins. The 50S large subunit contains 3 rRNA molecules (23S, 5S and 4.5S rRNA) and 33 different proteins.

The protein resides in the plastid. Its subcellular location is the chloroplast. Its function is as follows. Component of the chloroplast ribosome (chloro-ribosome), a dedicated translation machinery responsible for the synthesis of chloroplast genome-encoded proteins, including proteins of the transcription and translation machinery and components of the photosynthetic apparatus. In Spinacia oleracea (Spinach), this protein is Large ribosomal subunit protein cL37 alpha (PSRP5).